The following is a 582-amino-acid chain: PCNA-interacting partner (582 aa).

2 stretches are compositionally biased toward polar residues: residues 471-487 (GVNSSVGRPTIGTSSGN) and 501-510 (KSSSLTGNTS). Residues 471–514 (GVNSSVGRPTIGTSSGNVHLGRSEKEKVARKSSSLTGNTSSKRK) form a disordered region.

Belongs to the PARI family. As to quaternary structure, interacts with RAD51 and PCNA. Interacts with PARP1. Interacts with TASOR.

It is found in the cytoplasm. The protein localises to the nucleus. In terms of biological role, required to suppress inappropriate homologous recombination, thereby playing a central role DNA repair and in the maintenance of genomic stability. Antagonizes homologous recombination by interfering with the formation of the RAD51-DNA homologous recombination structure. Binds single-strand DNA and poly(A) homopolymers. Positively regulate the poly(ADP-ribosyl)ation activity of PARP1; however such function may be indirect. This chain is PCNA-interacting partner (PARPBP), found in Bos taurus (Bovine).